A 270-amino-acid polypeptide reads, in one-letter code: Putative carboxymethylenebutenolidase (270 aa).

Residues Cys147, Asp204, and His236 contribute to the active site.

The protein belongs to the dienelactone hydrolase family.

The catalysed reaction is 2-(5-oxo-2,5-dihydrofuran-2-ylidene)acetate + H2O = 4-oxohex-2-enedioate + H(+). The protein is Putative carboxymethylenebutenolidase (ysgA) of Salmonella typhi.